The primary structure comprises 104 residues: UPF0473 protein LGAS_0424 (104 aa).

This sequence belongs to the UPF0473 family.

This chain is UPF0473 protein LGAS_0424, found in Lactobacillus gasseri (strain ATCC 33323 / DSM 20243 / BCRC 14619 / CIP 102991 / JCM 1131 / KCTC 3163 / NCIMB 11718 / NCTC 13722 / AM63).